The following is a 78-amino-acid chain: Neurogranin (78 aa).

Methionine 1 is subject to N-acetylmethionine. Cysteine 3 and cysteine 51 are disulfide-bonded. The IQ domain occupies 26 to 47 (ANAAAAKIQASFRGHMARKKIK). Serine 36 carries the phosphoserine; by PHK and PKC modification. A disordered region spans residues 39–78 (GHMARKKIKSGECGRKGPGPGGPGGAGGARGGAGGGPSGD). A Collagen-like domain is found at 48-78 (SGECGRKGPGPGGPGGAGGARGGAGGGPSGD). Residues 54 to 78 (KGPGPGGPGGAGGARGGAGGGPSGD) show a composition bias toward gly residues. Arginine 68 carries the post-translational modification Citrulline; partial. At arginine 68 the chain carries Omega-N-methylarginine.

It belongs to the neurogranin family. Interacts with apo-calmodulin; this interaction decreases the affinity of calmodulin for calcium ions. Disulfide bond formation is redox-sensitive. The cysteine residues are readily oxidized by several nitric acid (NO) donors and other oxidants to form intramolecular disulfide. Cys-51 can form a disulfide with any other of the cysteine residues with an order of reactivity Cys-9 &gt; Cys-4 &gt; Cys-3. In terms of processing, phosphorylated at Ser-36 by PHK and PKC, phosphorylation prevents interaction with Calmodulin and interrupts several learning- and memory-associated functions.

It localises to the cytoplasm. The protein resides in the synapse. Its subcellular location is the cell projection. The protein localises to the dendritic spine. Functionally, regulates the affinity of calmodulin for calcium. Involved in synaptic plasticity and spatial learning. In Mus musculus (Mouse), this protein is Neurogranin (Nrgn).